Consider the following 96-residue polypeptide: MKLKPLGDRVLVKRLEQEEVTKGGIIIPDSAKEKPMKGEVIAVGPGKLAEDGKHLKMHVEKGDLVLFNKYAGTEIKVDDEDFLVMREDDILAVIEA.

This sequence belongs to the GroES chaperonin family. As to quaternary structure, heptamer of 7 subunits arranged in a ring. Interacts with the chaperonin GroEL.

It is found in the cytoplasm. In terms of biological role, together with the chaperonin GroEL, plays an essential role in assisting protein folding. The GroEL-GroES system forms a nano-cage that allows encapsulation of the non-native substrate proteins and provides a physical environment optimized to promote and accelerate protein folding. GroES binds to the apical surface of the GroEL ring, thereby capping the opening of the GroEL channel. The chain is Co-chaperonin GroES from Solidesulfovibrio magneticus (strain ATCC 700980 / DSM 13731 / RS-1) (Desulfovibrio magneticus).